We begin with the raw amino-acid sequence, 352 residues long: Peptide chain release factor 1 (352 aa).

Gln-229 carries the post-translational modification N5-methylglutamine.

The protein belongs to the prokaryotic/mitochondrial release factor family. In terms of processing, methylated by PrmC. Methylation increases the termination efficiency of RF1.

It is found in the cytoplasm. Its function is as follows. Peptide chain release factor 1 directs the termination of translation in response to the peptide chain termination codons UAG and UAA. The sequence is that of Peptide chain release factor 1 from Granulibacter bethesdensis (strain ATCC BAA-1260 / CGDNIH1).